A 258-amino-acid polypeptide reads, in one-letter code: Small ribosomal subunit protein mS23 (258 aa).

It belongs to the mitochondrion-specific ribosomal protein mS23 family. In terms of assembly, component of the mitochondrial small ribosomal subunit.

Its subcellular location is the mitochondrion. In Aspergillus fumigatus (strain ATCC MYA-4609 / CBS 101355 / FGSC A1100 / Af293) (Neosartorya fumigata), this protein is Small ribosomal subunit protein mS23 (rsm25).